A 769-amino-acid polypeptide reads, in one-letter code: Non-secreted LysM effector LysM17 (769 aa).

A helical transmembrane segment spans residues 173–193 (LPPLATAIPLAVVWASLASVI). Asn305, Asn368, Asn423, and Asn452 each carry an N-linked (GlcNAc...) asparagine glycan. LysM domains are found at residues 498–543 (RTIQ…HVCC) and 562–610 (YSNL…KICL). Residues Asn631, Asn671, Asn706, and Asn734 are each glycosylated (N-linked (GlcNAc...) asparagine).

Belongs to the secreted LysM effector family.

It is found in the membrane. Its function is as follows. Non-secreted LysM effector that might be involved in manipulation of host defenses for successful infection. The chain is Non-secreted LysM effector LysM17 from Penicillium expansum (Blue mold rot fungus).